Here is a 185-residue protein sequence, read N- to C-terminus: Large ribosomal subunit protein uL5 (185 aa).

It belongs to the universal ribosomal protein uL5 family. Part of the 50S ribosomal subunit; part of the 5S rRNA/L5/L18/L25 subcomplex. Contacts the 5S rRNA and the P site tRNA. Forms a bridge to the 30S subunit in the 70S ribosome.

Functionally, this is one of the proteins that bind and probably mediate the attachment of the 5S RNA into the large ribosomal subunit, where it forms part of the central protuberance. In the 70S ribosome it contacts protein S13 of the 30S subunit (bridge B1b), connecting the 2 subunits; this bridge is implicated in subunit movement. Contacts the P site tRNA; the 5S rRNA and some of its associated proteins might help stabilize positioning of ribosome-bound tRNAs. This chain is Large ribosomal subunit protein uL5, found in Rhodopseudomonas palustris (strain BisB5).